The chain runs to 50 residues: Phospholipase A2 trimorphin (50 aa).

Residues Y28, G30, and G32 each coordinate Ca(2+). C29 and C45 form a disulfide bridge. Residue H48 is part of the active site. D49 contacts Ca(2+).

The cofactor is Ca(2+). As to expression, expressed by the venom gland.

Its subcellular location is the secreted. The enzyme catalyses a 1,2-diacyl-sn-glycero-3-phosphocholine + H2O = a 1-acyl-sn-glycero-3-phosphocholine + a fatty acid + H(+). Its activity is regulated as follows. Inhibited by EDTA. Its function is as follows. PLA2 catalyzes the calcium-dependent hydrolysis of the 2-acyl groups in 3-sn-phosphoglycerides. The protein is Phospholipase A2 trimorphin of Trimorphodon lambda (Sonoran lyre snake).